The following is a 1196-amino-acid chain: DNA-directed RNA polymerase subunit 2 (1196 aa).

The disordered stretch occupies residues 1074-1095; the sequence is SRARGPTQLLTRQAPEGRSRDG. The segment at 1133-1154 adopts a C4-type zinc-finger fold; sequence CDSCGQFAHKVPEKKYYTCTGC.

The protein belongs to the RNA polymerase beta chain family.

The protein localises to the virion. The catalysed reaction is RNA(n) + a ribonucleoside 5'-triphosphate = RNA(n+1) + diphosphate. DNA-dependent RNA polymerase catalyzes the transcription of DNA into RNA using the four ribonucleoside triphosphates as substrates. This chain is DNA-directed RNA polymerase subunit 2 (RPO2), found in Acanthamoeba polyphaga mimivirus (APMV).